The sequence spans 130 residues: uncharacterized protein (130 aa).

One can recognise an HTH cro/C1-type domain in the interval 19 to 73; that stretch reads IYSLRLAKGLSRQQLAEVIDVTHQQLQKYEKAINRISVGRLVLIAEALDRNIDYF. The segment at residues 30-49 is a DNA-binding region (H-T-H motif); that stretch reads RQQLAEVIDVTHQQLQKYEK.

This is an uncharacterized protein from Rickettsia prowazekii (strain Madrid E).